Reading from the N-terminus, the 337-residue chain is Exopolysaccharide phosphotransferase cps2G (337 aa).

It belongs to the stealth family.

This Lactiplantibacillus plantarum (strain ATCC BAA-793 / NCIMB 8826 / WCFS1) (Lactobacillus plantarum) protein is Exopolysaccharide phosphotransferase cps2G (cps2G).